The following is a 173-amino-acid chain: ATP synthase subunit b (173 aa).

A helical membrane pass occupies residues 15 to 35 (GVEWGTVIVQVLTFIVLLALL).

It belongs to the ATPase B chain family. As to quaternary structure, F-type ATPases have 2 components, F(1) - the catalytic core - and F(0) - the membrane proton channel. F(1) has five subunits: alpha(3), beta(3), gamma(1), delta(1), epsilon(1). F(0) has three main subunits: a(1), b(2) and c(10-14). The alpha and beta chains form an alternating ring which encloses part of the gamma chain. F(1) is attached to F(0) by a central stalk formed by the gamma and epsilon chains, while a peripheral stalk is formed by the delta and b chains.

The protein localises to the cell membrane. In terms of biological role, f(1)F(0) ATP synthase produces ATP from ADP in the presence of a proton or sodium gradient. F-type ATPases consist of two structural domains, F(1) containing the extramembraneous catalytic core and F(0) containing the membrane proton channel, linked together by a central stalk and a peripheral stalk. During catalysis, ATP synthesis in the catalytic domain of F(1) is coupled via a rotary mechanism of the central stalk subunits to proton translocation. Functionally, component of the F(0) channel, it forms part of the peripheral stalk, linking F(1) to F(0). This is ATP synthase subunit b from Staphylococcus aureus (strain MRSA252).